The primary structure comprises 276 residues: 6-chlorohydroxyquinol 1,2-dioxygenase (276 aa).

The Fe cation site is built by tyrosine 157, tyrosine 191, histidine 215, and histidine 217.

Belongs to the intradiol ring-cleavage dioxygenase family. Fe(3+) serves as cofactor.

It participates in aromatic compound metabolism. The protein operates within xenobiotic degradation. Involved in the degradation of 2,4,6-trichlorophenol (2,4,6-TCP). May catalyze the oxidation of 6-chlorohydroxyquinol (6-CHQ) to 2-chloromaleylacetate (2-CMA). The protein is 6-chlorohydroxyquinol 1,2-dioxygenase of Cupriavidus pinatubonensis (strain JMP 134 / LMG 1197) (Cupriavidus necator (strain JMP 134)).